We begin with the raw amino-acid sequence, 613 residues long: DBH-like monooxygenase protein 1 (613 aa).

Positions Met-1 to Gly-19 are cleaved as a signal peptide. Residues Gly-20–Asp-592 lie on the Lumenal side of the membrane. In terms of domain architecture, DOMON spans Gly-35 to His-148. Asn-114 carries an N-linked (GlcNAc...) asparagine glycan. The active site involves Tyr-203. 2 cysteine pairs are disulfide-bonded: Cys-205–Cys-257 and Cys-242–Cys-269. Cu cation contacts are provided by His-235 and His-236. The N-linked (GlcNAc...) asparagine glycan is linked to Asn-247. 4 residues coordinate Cu cation: His-307, His-389, His-391, and Met-464. 3 disulfides stabilise this stretch: Cys-364–Cys-480, Cys-368–Cys-550, and Cys-443–Cys-465. The active site involves His-389. 2 N-linked (GlcNAc...) asparagine glycosylation sites follow: Asn-476 and Asn-517. Residues Phe-593 to Leu-613 traverse the membrane as a helical segment.

Belongs to the copper type II ascorbate-dependent monooxygenase family. The cofactor is Cu(2+). In terms of processing, N-glycosylated. Highly expressed in lung, kidney, brain and spinal cord.

The protein localises to the endoplasmic reticulum membrane. The protein is DBH-like monooxygenase protein 1 (MOXD1) of Homo sapiens (Human).